The following is a 559-amino-acid chain: Podocan-like protein 1 (559 aa).

A signal peptide spans Met-1 to Thr-20. Asn-64 carries N-linked (GlcNAc...) asparagine glycosylation. 20 LRR repeats span residues Thr-66–Arg-89, Leu-90–Ser-115, Asn-117–Ser-139, Leu-140–Glu-160, Lys-161–Gly-186, Glu-188–Pro-208, Ala-209–Leu-231, Thr-233–Lys-257, Leu-258–Thr-281, Thr-283–Lys-302, Ala-303–Pro-328, Leu-329–His-352, Gln-354–Ser-373, Ala-374–Arg-399, Leu-400–Ser-423, Arg-425–Gly-444, Leu-445–Glu-470, Leu-471–Ala-494, Glu-496–Ser-515, and Pro-517–Gly-541.

It belongs to the small leucine-rich proteoglycan (SLRP) family. SLRP class V subfamily. N-glycosylated. In terms of tissue distribution, detected in bone where it is expressed in osteoblasts and newly formed bone matrix (at protein level). Also expressed weakly in osteoclasts (at protein level). Expressed strongly in calvaria, lung and femur, and weakly in kidney.

It localises to the secreted. Its subcellular location is the extracellular space. The protein localises to the extracellular matrix. The sequence is that of Podocan-like protein 1 from Mus musculus (Mouse).